The following is a 201-amino-acid chain: Peptidyl-tRNA hydrolase (201 aa).

Residue Tyr-14 participates in tRNA binding. The active-site Proton acceptor is His-19. Residues Tyr-64, Asn-66, and Asn-113 each contribute to the tRNA site. The tract at residues 178-201 (PGPAMNRFNRKPEPPESGGEVAAK) is disordered.

It belongs to the PTH family. Monomer.

The protein resides in the cytoplasm. It carries out the reaction an N-acyl-L-alpha-aminoacyl-tRNA + H2O = an N-acyl-L-amino acid + a tRNA + H(+). Its function is as follows. Hydrolyzes ribosome-free peptidyl-tRNAs (with 1 or more amino acids incorporated), which drop off the ribosome during protein synthesis, or as a result of ribosome stalling. Functionally, catalyzes the release of premature peptidyl moieties from peptidyl-tRNA molecules trapped in stalled 50S ribosomal subunits, and thus maintains levels of free tRNAs and 50S ribosomes. In Koribacter versatilis (strain Ellin345), this protein is Peptidyl-tRNA hydrolase.